The primary structure comprises 43 residues: Protein PsbN (43 aa).

A helical membrane pass occupies residues 7-27; the sequence is LVVAIAAITICITAFAIYTAF.

It belongs to the PsbN family.

It is found in the cellular thylakoid membrane. May play a role in photosystem I and II biogenesis. In Synechococcus sp. (strain JA-3-3Ab) (Cyanobacteria bacterium Yellowstone A-Prime), this protein is Protein PsbN.